The following is a 96-amino-acid chain: Large ribosomal subunit protein eL14 (96 aa).

It belongs to the eukaryotic ribosomal protein eL14 family.

This is Large ribosomal subunit protein eL14 from Desulfurococcus amylolyticus (strain DSM 18924 / JCM 16383 / VKM B-2413 / 1221n) (Desulfurococcus kamchatkensis).